We begin with the raw amino-acid sequence, 721 residues long: Polyribonucleotide nucleotidyltransferase (721 aa).

Mg(2+)-binding residues include D495 and D501. Positions 562–621 (PRLLSFRIDPELIGTVIGPGGRTIKGITERTNTKIDIEDGGIVTIASHDGAAAEEAQKII) constitute a KH domain. Positions 631–699 (GEVFSGSITR…NRGRINLTLR (69 aa)) constitute an S1 motif domain.

The protein belongs to the polyribonucleotide nucleotidyltransferase family. Mg(2+) is required as a cofactor.

The protein resides in the cytoplasm. The catalysed reaction is RNA(n+1) + phosphate = RNA(n) + a ribonucleoside 5'-diphosphate. In terms of biological role, involved in mRNA degradation. Catalyzes the phosphorolysis of single-stranded polyribonucleotides processively in the 3'- to 5'-direction. The sequence is that of Polyribonucleotide nucleotidyltransferase from Synechococcus sp. (strain CC9605).